A 701-amino-acid polypeptide reads, in one-letter code: Potassium-transporting ATPase ATP-binding subunit 1 (701 aa).

Residues 1 to 26 are disordered; it reads MNPVAPTRKVKPPRNRPSDRRQARKK. Helical transmembrane passes span 57 to 77, 90 to 110, 241 to 261, and 278 to 298; these read MFVV…PDLF, GLLT…EAVA, VALT…IATL, and IALL…AIGI. D329 serves as the catalytic 4-aspartylphosphate intermediate. Residues D366, E370, 397–404, and K416 contribute to the ATP site; that span reads FSAKTRMS. Mg(2+) contacts are provided by D539 and D543. 3 helical membrane-spanning segments follow: residues 599-619, 635-655, and 681-701; these read FSIA…FAAA, AVLS…PLAL, and VIAP…VGLA.

Belongs to the cation transport ATPase (P-type) (TC 3.A.3) family. Type IA subfamily. As to quaternary structure, the system is composed of three essential subunits: KdpA, KdpB and KdpC.

It is found in the cell inner membrane. The catalysed reaction is K(+)(out) + ATP + H2O = K(+)(in) + ADP + phosphate + H(+). Part of the high-affinity ATP-driven potassium transport (or Kdp) system, which catalyzes the hydrolysis of ATP coupled with the electrogenic transport of potassium into the cytoplasm. This subunit is responsible for energy coupling to the transport system and for the release of the potassium ions to the cytoplasm. This chain is Potassium-transporting ATPase ATP-binding subunit 1, found in Nostoc sp. (strain PCC 7120 / SAG 25.82 / UTEX 2576).